The sequence spans 1174 residues: MNATDAESRKPENKPSSESSSSGSTSGSSDGEVSSKTYFKNNKSKVLSGQREVVLEVVRDLSYTICKEAEEKLVERFPRKDGSNEMLPKEDSINTNHNYTTDSNEHPVELTTKTEECKNTEKTKKKSFVRALSKDKQLSAYRSRSRSTRLSYSGHISRTHSVEKSLSRYKKSVLRNRRTSFGHGRDSSTTKRSVSRDKDNRLRRRIGSSRSHTRSHSRFRRSEKKLPSRSPRRIRSQERRHERRRSMSSDYERIALRRSEPIKRRDKDEFFKNNKKVSGDIKKGKGNDNGTVAELEAKITERQRKSLDILTSRTGGACLTPDKLRMIQAEITDKSSAAYQSIAREALKKYIHGYINKVNVDSVAVITRKLLKDNIVRGRGVLCHSIIQAQATSPTFTHVYAAMVAIINSKFPNIGELLLKRLVIQFKRAFGCNDKTVCLTSSHFIAHLVNQRVAHEILALEILTLLIESPTDDNVEVAITFLKECGMKLTEVSSDRVGGIFELLKNILHQGKLDKRVQYMIKVLFQVRRDGFKDHQSIIESLELVEEYAQFTHLLLLEDVTYPKDILNEFKFDDQYETNEEKYKALSKDILGSHASDSDGSFGSGSNSETALSDCDKVKNEVNDKYTSGDIIDETKPNLIALRRTIYLTLNSCLDYEECAQKLMKTQLKTCQQNEFCQILLDCCAEQRTYEKFYGLLTHRICKMNKSFIEPFKEIFKDICQTTHCLDTNRLRNISKFFAHLLFTDAISWDVLDCIKLTEDEAITSRCIFIKSFFQELVEYMGLYHFNKKLKTEVLAGTLAGLFPKDNPRNIRFSINFFTSIGLGGITNELCQLLKIAPKSAPSSSSSSSLSSELSAPSDDDSSSDSENKKKHKGKNKKMTKKKNPSKKKEKTKKFVGKNKIAAKNKTIKRRTDKDNSSSKDNFLKSESSSNESISLDSLSSELFAPSSYSSSESSNDSESKEKHKGKNKKMTKKKNPSNKKEKTKKKLSKNKKAPNKNTKKRMTEKDISSSESSISESKSLNCSASNQNENEKRKKRVTSKSRTKRVKMFKQCQWVDADNQRDIKRKKRAEYRYEPLVYRKRNEECLKKGAPNCXKDNYGNRQNHEISQRHDSEIKRRREERKKRHHEKNHSREYKRSKLGLCQREYFLYMCCQFYYPCTFQCLCQNCHFTFYS.

Residues 1–15 (MNATDAESRKPENKP) show a composition bias toward basic and acidic residues. 3 disordered regions span residues 1 to 51 (MNAT…SGQR), 80 to 109 (KDGSNEMLPKEDSINTNHNYTTDSNEHPVE), and 136 to 259 (KQLS…LRRS). Residues 16 to 35 (SSESSSSGSTSGSSDGEVSS) are compositionally biased toward low complexity. Residues 36 to 47 (KTYFKNNKSKVL) are compositionally biased toward polar residues. Residues 80 to 92 (KDGSNEMLPKEDS) are compositionally biased toward basic and acidic residues. Residues 93 to 102 (INTNHNYTTD) show a composition bias toward polar residues. Over residues 138-153 (LSAYRSRSRSTRLSYS) the composition is skewed to low complexity. Residues 167–180 (SRYKKSVLRNRRTS) show a composition bias toward basic residues. Residues 183-200 (HGRDSSTTKRSVSRDKDN) are compositionally biased toward basic and acidic residues. A compositionally biased stretch (basic residues) spans 201–223 (RLRRRIGSSRSHTRSHSRFRRSE). Positions 235–259 (RSQERRHERRRSMSSDYERIALRRS) are enriched in basic and acidic residues. The region spanning 348–531 (KKYIHGYINK…KVLFQVRRDG (184 aa)) is the MIF4G domain. The MI domain maps to 641-757 (ALRRTIYLTL…SWDVLDCIKL (117 aa)). Positions 840–857 (SAPSSSSSSSLSSELSAP) are enriched in low complexity. Disordered regions lie at residues 840–1045 (SAPS…SRTK) and 1096–1133 (KDNYGNRQNHEISQRHDSEIKRRREERKKRHHEKNHSR). Basic residues predominate over residues 869–909 (KKKHKGKNKKMTKKKNPSKKKEKTKKFVGKNKIAAKNKTIK). Positions 910–924 (RRTDKDNSSSKDNFL) are enriched in basic and acidic residues. Over residues 926-957 (SESSSNESISLDSLSSELFAPSSYSSSESSND) the composition is skewed to low complexity. A compositionally biased stretch (basic residues) spans 963–1001 (KHKGKNKKMTKKKNPSNKKEKTKKKLSKNKKAPNKNTKK). A compositionally biased stretch (low complexity) spans 1010–1020 (SSESSISESKS). Positions 1034 to 1045 (RKKRVTSKSRTK) are enriched in basic residues. A compositionally biased stretch (basic and acidic residues) spans 1103 to 1118 (QNHEISQRHDSEIKRR). Positions 1119-1130 (REERKKRHHEKN) are enriched in basic residues.

Belongs to the CWC22 family. As to quaternary structure, component of the spliceosome C complex.

The protein localises to the nucleus speckle. In terms of biological role, male determiner protein (M-factor) that controls male somatic sexual differentiation. Acts as a dominant factor that regulates the mRNA splicing of transformer (tra) and doublesex (dsx) transcripts and promotes expression of male splice forms of tra and dsx. Probably acts as a component of the spliceosome C complex required for mRNA splicing factor and exon-junction complex (EJC) assembly. Hinders eIF4AIII from non-specifically binding RNA and escorts it to the splicing machinery to promote EJC assembly on mature mRNAs. The sequence is that of Male determiner protein Mdmd(III) from Musca domestica (House fly).